Here is a 246-residue protein sequence, read N- to C-terminus: ATP synthase subunit a, chloroplastic (246 aa).

4 consecutive transmembrane segments (helical) span residues 35-55, 94-114, 133-153, and 202-222; these read GQVFIVSWLVIAALIGFALVG, VPYIATVFLFIFGANWAGALI, INVTVALALLTSLSYFYAGLS, and VFALLVPILIPLPVMTLGLFA.

The protein belongs to the ATPase A chain family. In terms of assembly, F-type ATPases have 2 components, CF(1) - the catalytic core - and CF(0) - the membrane proton channel. CF(1) has five subunits: alpha(3), beta(3), gamma(1), delta(1), epsilon(1). CF(0) has four main subunits: a, b, b' and c.

The protein localises to the plastid. It is found in the chloroplast thylakoid membrane. Key component of the proton channel; it plays a direct role in the translocation of protons across the membrane. The protein is ATP synthase subunit a, chloroplastic of Rhodomonas salina (Cryptomonas salina).